The following is a 229-amino-acid chain: Urease accessory protein UreF (229 aa).

It belongs to the UreF family. In terms of assembly, ureD, UreF and UreG form a complex that acts as a GTP-hydrolysis-dependent molecular chaperone, activating the urease apoprotein by helping to assemble the nickel containing metallocenter of UreC. The UreE protein probably delivers the nickel.

The protein localises to the cytoplasm. Its function is as follows. Required for maturation of urease via the functional incorporation of the urease nickel metallocenter. In Staphylococcus aureus (strain bovine RF122 / ET3-1), this protein is Urease accessory protein UreF.